The sequence spans 411 residues: Potassium channel subfamily K member 3 (411 aa).

The Cytoplasmic segment spans residues M1–T8. Residues L9 to L29 traverse the membrane as a helical segment. Residue N53 is glycosylated (N-linked (GlcNAc...) asparagine). Residues W78 to P101 constitute an intramembrane region (pore-forming). The chain crosses the membrane as a helical span at residues V108–L128. Over G129–N158 the chain is Cytoplasmic. Residues M159–S179 traverse the membrane as a helical segment. The pore-forming intramembrane region spans W184–A207. A helical membrane pass occupies residues F223–V243. The Cytoplasmic segment spans residues L244–V411.

Belongs to the two pore domain potassium channel (TC 1.A.1.8) family. As to quaternary structure, homodimer. Heterodimer with KCNK1. Heterodimer with KCNK9. Strongest expression in heart. Moderate expression in lung and brain. Low levels in liver, kidney and skeletal muscle. Expressed in cerebellar granule cells (at protein level).

It localises to the cell membrane. It carries out the reaction K(+)(in) = K(+)(out). The enzyme catalyses Na(+)(in) = Na(+)(out). Its activity is regulated as follows. Inhibited by extracellular acidification, muscarinic signaling, divalent metal cations Zn(2+) and Ba(2+), isoflurane, bupivacaine and phenytoin. Activated by protein kinase A. Ruthenium red resistant. K(+) channel that conducts voltage-dependent outward rectifying currents upon membrane depolarization. Voltage sensing is coupled to K(+) electrochemical gradient in an 'ion flux gating' mode where outward but not inward ion flow opens the gate. Changes ion selectivity and becomes permeable to Na(+) ions in response to extracellular acidification. Protonation of the pH sensor His-98 stabilizes C-type inactivation conformation likely converting the channel from outward K(+)-conducting, to inward Na(+)-conducting to nonconductive state. Homo- and heterodimerizes to form functional channels with distinct regulatory and gating properties. Allows K(+) currents with fast-gating kinetics important for the repolarization and hyperpolarization phases of action potentials. In cerebellar granule cells, heteromeric KCNK3:KCNK9 channel may hyperpolarize the resting membrane potential to limit intrinsic neuronal excitability, but once the action potential threshold is reached, it may support high-frequency action potential firing and increased neuronal excitability. Dispensable for central chemosensory respiration i.e. breathing controlled by brainstem CO2/pH, it rather conducts pH-sensitive currents and controls the firing rate of serotonergic raphe neurons involved in potentiation of the respiratory chemoreflex. Additionally, imparts chemosensitivity to type 1 cells in carotid bodies which respond to a decrease in arterial oxygen pressure or an increase in carbon dioxide pressure or pH to initiate adaptive changes in pulmonary ventilation. In adrenal gland, contributes to the maintenance of a hyperpolarized resting membrane potential of aldosterone-producing cells at zona glomerulosa and limits aldosterone release as part of a regulatory mechanism that controls arterial blood pressure and electrolyte homeostasis. In brown adipocytes, mediates K(+) efflux that counteracts norepinephrine-induced membrane depolarization, limits Ca(2+) efflux and downstream cAMP and PKA signaling, ultimately attenuating lipid oxidation and adaptive thermogenesis. The chain is Potassium channel subfamily K member 3 from Rattus norvegicus (Rat).